The primary structure comprises 87 residues: Keratin-associated protein 19-3 (87 aa).

The interval 9-82 (GGLGYGYGSF…RRPSCCGGYG (74 aa)) is 23 X 2 AA repeats of G-[YCGS].

It belongs to the KRTAP type 19 family. Interacts with hair keratins. Strong expression in narrowly defined pattern restricted to the lower and middle cortical regions of the hair shaft in both developing and cycling hair. During hair follicle regression (catagen), expression levels decrease until expression is no longer detectable in follicles at resting stage (telogen).

Functionally, in the hair cortex, hair keratin intermediate filaments are embedded in an interfilamentous matrix, consisting of hair keratin-associated proteins (KRTAP), which are essential for the formation of a rigid and resistant hair shaft through their extensive disulfide bond cross-linking with abundant cysteine residues of hair keratins. The matrix proteins include the high-sulfur and high-glycine-tyrosine keratins. This chain is Keratin-associated protein 19-3 (Krtap19-3), found in Mus musculus (Mouse).